A 365-amino-acid chain; its full sequence is tRNA/tmRNA (uracil-C(5))-methyltransferase (365 aa).

S-adenosyl-L-methionine is bound by residues glutamine 189, tyrosine 217, asparagine 222, glutamate 238, and aspartate 298. Residue cysteine 323 is the Nucleophile of the active site. Glutamate 357 serves as the catalytic Proton acceptor.

This sequence belongs to the class I-like SAM-binding methyltransferase superfamily. RNA M5U methyltransferase family. TrmA subfamily.

It catalyses the reaction uridine(54) in tRNA + S-adenosyl-L-methionine = 5-methyluridine(54) in tRNA + S-adenosyl-L-homocysteine + H(+). The enzyme catalyses uridine(341) in tmRNA + S-adenosyl-L-methionine = 5-methyluridine(341) in tmRNA + S-adenosyl-L-homocysteine + H(+). In terms of biological role, dual-specificity methyltransferase that catalyzes the formation of 5-methyluridine at position 54 (m5U54) in all tRNAs, and that of position 341 (m5U341) in tmRNA (transfer-mRNA). The polypeptide is tRNA/tmRNA (uracil-C(5))-methyltransferase (Shewanella loihica (strain ATCC BAA-1088 / PV-4)).